Consider the following 266-residue polypeptide: Putative carbamate hydrolase RutD (266 aa).

Positions 15–239 (PVVVLSAGLG…RVEMPWGGHA (225 aa)) constitute an AB hydrolase-1 domain.

The protein belongs to the AB hydrolase superfamily. Hydrolase RutD family.

It carries out the reaction carbamate + 2 H(+) = NH4(+) + CO2. In terms of biological role, involved in pyrimidine catabolism. May facilitate the hydrolysis of carbamate, a reaction that can also occur spontaneously. The polypeptide is Putative carbamate hydrolase RutD (Klebsiella variicola (strain At-22)).